The primary structure comprises 261 residues: Cytochrome c oxidase subunit 3 (261 aa).

Residues 1 to 15 (MTHQTHAYHMVNPSP) lie on the Mitochondrial matrix side of the membrane. The helical transmembrane segment at 16 to 34 (WPLTGALSALLMTSGLAMW) threads the bilayer. The Mitochondrial intermembrane segment spans residues 35-40 (FHYNSM). The chain crosses the membrane as a helical span at residues 41-66 (LLLTLGLMTNLLTMYQWWRDIVREST). Residues 67–72 (FQGHHT) are Mitochondrial matrix-facing. A helical membrane pass occupies residues 73–105 (LVVQKGLRYGMILFIISEVFFFSGFFWAFYHSS). Topologically, residues 106–128 (LAPTPELGGCWPPTGIHPLNPME) are mitochondrial intermembrane. The chain crosses the membrane as a helical span at residues 129-152 (VPLLNTSVLLASGVSITWAHHSLM). At 153-155 (EGN) the chain is on the mitochondrial matrix side. Residues 156 to 183 (RKHMLQALFITISLGVYFTLLQASEYYE) traverse the membrane as a helical segment. Topologically, residues 184-190 (APFTISD) are mitochondrial intermembrane. A helical transmembrane segment spans residues 191-223 (GIYGSTFFVATGFHGLHVIIGSTFLIVCFLRQL). Topologically, residues 224 to 232 (KFHFTSNHH) are mitochondrial matrix. A helical membrane pass occupies residues 233–256 (FGFEAAAWYWHFVDVVWLFLYVSI). Residues 257-261 (YWWGS) lie on the Mitochondrial intermembrane side of the membrane.

The protein belongs to the cytochrome c oxidase subunit 3 family. In terms of assembly, component of the cytochrome c oxidase (complex IV, CIV), a multisubunit enzyme composed of 14 subunits. The complex is composed of a catalytic core of 3 subunits MT-CO1, MT-CO2 and MT-CO3, encoded in the mitochondrial DNA, and 11 supernumerary subunits COX4I, COX5A, COX5B, COX6A, COX6B, COX6C, COX7A, COX7B, COX7C, COX8 and NDUFA4, which are encoded in the nuclear genome. The complex exists as a monomer or a dimer and forms supercomplexes (SCs) in the inner mitochondrial membrane with NADH-ubiquinone oxidoreductase (complex I, CI) and ubiquinol-cytochrome c oxidoreductase (cytochrome b-c1 complex, complex III, CIII), resulting in different assemblies (supercomplex SCI(1)III(2)IV(1) and megacomplex MCI(2)III(2)IV(2)).

It is found in the mitochondrion inner membrane. It carries out the reaction 4 Fe(II)-[cytochrome c] + O2 + 8 H(+)(in) = 4 Fe(III)-[cytochrome c] + 2 H2O + 4 H(+)(out). Component of the cytochrome c oxidase, the last enzyme in the mitochondrial electron transport chain which drives oxidative phosphorylation. The respiratory chain contains 3 multisubunit complexes succinate dehydrogenase (complex II, CII), ubiquinol-cytochrome c oxidoreductase (cytochrome b-c1 complex, complex III, CIII) and cytochrome c oxidase (complex IV, CIV), that cooperate to transfer electrons derived from NADH and succinate to molecular oxygen, creating an electrochemical gradient over the inner membrane that drives transmembrane transport and the ATP synthase. Cytochrome c oxidase is the component of the respiratory chain that catalyzes the reduction of oxygen to water. Electrons originating from reduced cytochrome c in the intermembrane space (IMS) are transferred via the dinuclear copper A center (CU(A)) of subunit 2 and heme A of subunit 1 to the active site in subunit 1, a binuclear center (BNC) formed by heme A3 and copper B (CU(B)). The BNC reduces molecular oxygen to 2 water molecules using 4 electrons from cytochrome c in the IMS and 4 protons from the mitochondrial matrix. The sequence is that of Cytochrome c oxidase subunit 3 (MT-CO3) from Ceratotherium simum (White rhinoceros).